We begin with the raw amino-acid sequence, 233 residues long: Putative N-acetylmannosamine-6-phosphate 2-epimerase (233 aa).

The protein belongs to the NanE family.

The enzyme catalyses an N-acyl-D-glucosamine 6-phosphate = an N-acyl-D-mannosamine 6-phosphate. Its pathway is amino-sugar metabolism; N-acetylneuraminate degradation; D-fructose 6-phosphate from N-acetylneuraminate: step 3/5. Functionally, converts N-acetylmannosamine-6-phosphate (ManNAc-6-P) to N-acetylglucosamine-6-phosphate (GlcNAc-6-P). This is Putative N-acetylmannosamine-6-phosphate 2-epimerase from Yersinia pseudotuberculosis serotype O:3 (strain YPIII).